The primary structure comprises 314 residues: MEHFISIRDIGKKEILNILEEAEKMEELLNSEKHSNIMNGKILATLFYEPSTRTRLSFETAMKRLGGTVVGFTDIANTSVMKGETLPDTIKVINGYADLIVMRHPSDGAPRLACEYSNIPIINAGDGSNQHPSQTMLDLYTIKREIGHIDNIKIAFIGDLKYGRTVHSLCHALSFFENIEIVFIAPKELKIPKEITDDLDNKNKLYNNNIKYSETGDIDLTGMDVVYMTRIQKERFPDLSEYQKVKGTYKLTREHVEDKDLIIMHPLPRVDEIDISVDELPQAKYFKQSFYGVPVRMAILKILNEKNKNKKSEI.

Positions 53 and 54 each coordinate carbamoyl phosphate. K82 serves as a coordination point for L-aspartate. Residues R103, H131, and Q134 each contribute to the carbamoyl phosphate site. Residues R164 and R230 each coordinate L-aspartate. L267 and P268 together coordinate carbamoyl phosphate.

The protein belongs to the aspartate/ornithine carbamoyltransferase superfamily. ATCase family. As to quaternary structure, heterooligomer of catalytic and regulatory chains.

It catalyses the reaction carbamoyl phosphate + L-aspartate = N-carbamoyl-L-aspartate + phosphate + H(+). The protein operates within pyrimidine metabolism; UMP biosynthesis via de novo pathway; (S)-dihydroorotate from bicarbonate: step 2/3. Catalyzes the condensation of carbamoyl phosphate and aspartate to form carbamoyl aspartate and inorganic phosphate, the committed step in the de novo pyrimidine nucleotide biosynthesis pathway. The sequence is that of Aspartate carbamoyltransferase catalytic subunit from Methanococcus aeolicus (strain ATCC BAA-1280 / DSM 17508 / OCM 812 / Nankai-3).